A 544-amino-acid chain; its full sequence is Chaperonin GroEL (544 aa).

ATP-binding positions include 30–33 (TLGP), Lys51, 87–91 (DGTTT), Gly415, 479–481 (NAA), and Asp495. Positions 525 to 537 (PQDTPATAAAPDM) are enriched in low complexity. A disordered region spans residues 525-544 (PQDTPATAAAPDMGGMGGMM).

It belongs to the chaperonin (HSP60) family. As to quaternary structure, forms a cylinder of 14 subunits composed of two heptameric rings stacked back-to-back. Interacts with the co-chaperonin GroES.

The protein resides in the cytoplasm. It carries out the reaction ATP + H2O + a folded polypeptide = ADP + phosphate + an unfolded polypeptide.. In terms of biological role, together with its co-chaperonin GroES, plays an essential role in assisting protein folding. The GroEL-GroES system forms a nano-cage that allows encapsulation of the non-native substrate proteins and provides a physical environment optimized to promote and accelerate protein folding. This is Chaperonin GroEL from Ruthia magnifica subsp. Calyptogena magnifica.